The sequence spans 119 residues: Dihydroneopterin aldolase (119 aa).

Residues Glu-21, Tyr-53, and Val-72–Glu-73 contribute to the substrate site. Lys-98 serves as the catalytic Proton donor/acceptor.

The protein belongs to the DHNA family.

It catalyses the reaction 7,8-dihydroneopterin = 6-hydroxymethyl-7,8-dihydropterin + glycolaldehyde. The protein operates within cofactor biosynthesis; tetrahydrofolate biosynthesis; 2-amino-4-hydroxy-6-hydroxymethyl-7,8-dihydropteridine diphosphate from 7,8-dihydroneopterin triphosphate: step 3/4. In terms of biological role, catalyzes the conversion of 7,8-dihydroneopterin to 6-hydroxymethyl-7,8-dihydropterin. This chain is Dihydroneopterin aldolase (folB), found in Streptomyces coelicolor (strain ATCC BAA-471 / A3(2) / M145).